The sequence spans 482 residues: UDP-N-acetylmuramate--L-alanine ligase (482 aa).

G129–T135 provides a ligand contact to ATP.

The protein belongs to the MurCDEF family.

The protein localises to the cytoplasm. The catalysed reaction is UDP-N-acetyl-alpha-D-muramate + L-alanine + ATP = UDP-N-acetyl-alpha-D-muramoyl-L-alanine + ADP + phosphate + H(+). It participates in cell wall biogenesis; peptidoglycan biosynthesis. Cell wall formation. This Acinetobacter baumannii (strain AB307-0294) protein is UDP-N-acetylmuramate--L-alanine ligase.